The primary structure comprises 527 residues: Zinc finger C2HC domain-containing protein 1C (527 aa).

Disordered stretches follow at residues 18 to 105 (HNKT…GQGK) and 145 to 170 (VHRKSHSTSDAGADGDQNGYPRLPDS). The span at 50 to 61 (NSFQSKLWSNTE) shows a compositional bias: polar residues. Residues 71-85 (RPKRNVCTKARRHSC) show a composition bias toward basic residues. A compositionally biased stretch (low complexity) spans 93-102 (QQGSGNNAQG). Residues 207–254 (TQIQRLEAAGESLQKEIRRKEILLQEKLKKTEEGLRRMQKEKKQAIFQ) are a coiled coil. Disordered regions lie at residues 264 to 316 (LPRR…LSDY) and 352 to 379 (LGSTLQESSRSGTPGSSGSSSSTEEPEL). Over residues 286 to 298 (FRSEVFSRNRGED) the composition is skewed to basic and acidic residues. Positions 301–312 (CDQAQENPSPRQ) are enriched in polar residues. Residues 358–374 (ESSRSGTPGSSGSSSST) show a composition bias toward low complexity. C2HC/C3H-type zinc fingers lie at residues 378-407 (ELAKCSHCGRSFLSLRLQRHSTVCGKMQGS) and 489-518 (DYVQCPHCSRHFAPKVAERHIPKCKTIKNR). Residues Cys-382, Cys-385, His-397, Cys-401, Cys-493, Cys-496, His-508, and Cys-512 each contribute to the Zn(2+) site. Positions 507–527 (RHIPKCKTIKNRPPPPRRHDS) are disordered.

Belongs to the ZC2HC1 family. Requires Zn(2+) as cofactor.

The chain is Zinc finger C2HC domain-containing protein 1C (Zc2hc1c) from Mus musculus (Mouse).